The sequence spans 104 residues: Large ribosomal subunit protein bL21 (104 aa).

This sequence belongs to the bacterial ribosomal protein bL21 family. As to quaternary structure, part of the 50S ribosomal subunit. Contacts protein L20.

In terms of biological role, this protein binds to 23S rRNA in the presence of protein L20. The protein is Large ribosomal subunit protein bL21 of Clostridium botulinum (strain ATCC 19397 / Type A).